A 198-amino-acid chain; its full sequence is dTTP/UTP pyrophosphatase (198 aa).

The active-site Proton acceptor is Asp-75.

Belongs to the Maf family. YhdE subfamily. A divalent metal cation serves as cofactor.

Its subcellular location is the cytoplasm. The enzyme catalyses dTTP + H2O = dTMP + diphosphate + H(+). It catalyses the reaction UTP + H2O = UMP + diphosphate + H(+). In terms of biological role, nucleoside triphosphate pyrophosphatase that hydrolyzes dTTP and UTP. May have a dual role in cell division arrest and in preventing the incorporation of modified nucleotides into cellular nucleic acids. The protein is dTTP/UTP pyrophosphatase of Wolbachia pipientis wMel.